A 325-amino-acid polypeptide reads, in one-letter code: Diacylglycerol acyltransferase/mycolyltransferase Ag85B (325 aa).

A signal peptide spans 1–40; the sequence is MTDVSGKIRAWGRRLLVGAAAAAALPGLVGLAGGAATAGA. 82–83 provides a ligand contact to substrate; it reads LR. Residues 98–108 form a fibronectin-binding region; the sequence is FEWYYQSGLSV. A disulfide bridge connects residues C127 and C132. Residues S166 and D194 each coordinate substrate. The active-site Nucleophile is S166. E270 is a catalytic residue. Substrate-binding positions include 272–275, K279, and 302–304; these read FVRS and HSW. H302 is an active-site residue.

Belongs to the mycobacterial A85 antigen family.

The protein localises to the secreted. It catalyses the reaction 2 alpha,alpha'-trehalose 6-mycolate = alpha,alpha'-trehalose 6,6'-bismycolate + alpha,alpha-trehalose. The catalysed reaction is an acyl-CoA + a 1,2-diacyl-sn-glycerol = a triacyl-sn-glycerol + CoA. Functionally, the antigen 85 proteins (FbpA, FbpB, FbpC) are responsible for the high affinity of mycobacteria for fibronectin, a large adhesive glycoprotein, which facilitates the attachment of M.tuberculosis to murine alveolar macrophages (AMs). They also help to maintain the integrity of the cell wall by catalyzing the transfer of mycolic acids to cell wall arabinogalactan and through the synthesis of alpha,alpha-trehalose dimycolate (TDM, cord factor). They catalyze the transfer of a mycoloyl residue from one molecule of alpha,alpha-trehalose monomycolate (TMM) to another TMM, leading to the formation of TDM. The sequence is that of Diacylglycerol acyltransferase/mycolyltransferase Ag85B (fbpB) from Mycobacterium kansasii.